The chain runs to 365 residues: UDP-N-acetylglucosamine--N-acetylmuramyl-(pentapeptide) pyrophosphoryl-undecaprenol N-acetylglucosamine transferase (365 aa).

Residues 20–22, asparagine 132, arginine 168, serine 196, isoleucine 253, and glutamine 298 each bind UDP-N-acetyl-alpha-D-glucosamine; that span reads TGG.

Belongs to the glycosyltransferase 28 family. MurG subfamily.

The protein resides in the cell inner membrane. The enzyme catalyses di-trans,octa-cis-undecaprenyl diphospho-N-acetyl-alpha-D-muramoyl-L-alanyl-D-glutamyl-meso-2,6-diaminopimeloyl-D-alanyl-D-alanine + UDP-N-acetyl-alpha-D-glucosamine = di-trans,octa-cis-undecaprenyl diphospho-[N-acetyl-alpha-D-glucosaminyl-(1-&gt;4)]-N-acetyl-alpha-D-muramoyl-L-alanyl-D-glutamyl-meso-2,6-diaminopimeloyl-D-alanyl-D-alanine + UDP + H(+). It participates in cell wall biogenesis; peptidoglycan biosynthesis. Cell wall formation. Catalyzes the transfer of a GlcNAc subunit on undecaprenyl-pyrophosphoryl-MurNAc-pentapeptide (lipid intermediate I) to form undecaprenyl-pyrophosphoryl-MurNAc-(pentapeptide)GlcNAc (lipid intermediate II). The polypeptide is UDP-N-acetylglucosamine--N-acetylmuramyl-(pentapeptide) pyrophosphoryl-undecaprenol N-acetylglucosamine transferase (Ralstonia nicotianae (strain ATCC BAA-1114 / GMI1000) (Ralstonia solanacearum)).